Consider the following 247-residue polypeptide: MHKLVLIRHGESTWNLENRFTGWTDVDLTPTGIEQAKNAGRLLKAEGYDFDLAYTSVLKRATRTLWHCLDEMDRTWLPVEHSWRLNERHYGALQGLNKADMAKQYGDAQVLVWRRSYDTPPPALEPTDPRCERGDIRYAGLAPEQVPLTECLKDTVARVLPYWNEAIAPTIRSGKRVLIAAHGNSIRALVKYLDGISDQDIVGLNIPNGIPLVYELDAELKPLRSYYLGDAEATAKAAAAVAAQGKA.

Residues 8–15 (RHGESTWN), 21–22 (TG), Arg60, 87–90 (ERHY), Lys98, 114–115 (RR), and 183–184 (GN) each bind substrate. Catalysis depends on His9, which acts as the Tele-phosphohistidine intermediate. Glu87 (proton donor/acceptor) is an active-site residue.

The protein belongs to the phosphoglycerate mutase family. BPG-dependent PGAM subfamily. In terms of assembly, homodimer.

The enzyme catalyses (2R)-2-phosphoglycerate = (2R)-3-phosphoglycerate. It functions in the pathway carbohydrate degradation; glycolysis; pyruvate from D-glyceraldehyde 3-phosphate: step 3/5. Functionally, catalyzes the interconversion of 2-phosphoglycerate and 3-phosphoglycerate. This is 2,3-bisphosphoglycerate-dependent phosphoglycerate mutase from Acidovorax sp. (strain JS42).